A 389-amino-acid polypeptide reads, in one-letter code: Phospho-N-acetylmuramoyl-pentapeptide-transferase (389 aa).

The next 10 membrane-spanning stretches (helical) occupy residues 25-45 (RAVM…PWVI), 73-93 (TMGG…WGDL), 97-117 (FIWI…VDDY), 135-155 (FWQS…VSEA), 190-210 (ISYP…IVGA), 222-242 (GLVI…AYVM), 258-278 (GAGE…AFLW), 286-306 (VFMG…VAVI), 311-331 (IVLF…MLQV), and 366-386 (QVVV…LTTL).

The protein belongs to the glycosyltransferase 4 family. MraY subfamily. Mg(2+) serves as cofactor.

Its subcellular location is the cell inner membrane. The enzyme catalyses UDP-N-acetyl-alpha-D-muramoyl-L-alanyl-gamma-D-glutamyl-meso-2,6-diaminopimeloyl-D-alanyl-D-alanine + di-trans,octa-cis-undecaprenyl phosphate = di-trans,octa-cis-undecaprenyl diphospho-N-acetyl-alpha-D-muramoyl-L-alanyl-D-glutamyl-meso-2,6-diaminopimeloyl-D-alanyl-D-alanine + UMP. It participates in cell wall biogenesis; peptidoglycan biosynthesis. In terms of biological role, catalyzes the initial step of the lipid cycle reactions in the biosynthesis of the cell wall peptidoglycan: transfers peptidoglycan precursor phospho-MurNAc-pentapeptide from UDP-MurNAc-pentapeptide onto the lipid carrier undecaprenyl phosphate, yielding undecaprenyl-pyrophosphoryl-MurNAc-pentapeptide, known as lipid I. The polypeptide is Phospho-N-acetylmuramoyl-pentapeptide-transferase (Burkholderia cenocepacia (strain HI2424)).